The primary structure comprises 301 residues: Glucose-1-phosphate adenylyltransferase large subunit (301 aa).

The protein belongs to the bacterial/plant glucose-1-phosphate adenylyltransferase family. In terms of assembly, heterotetramer.

The protein localises to the plastid. The protein resides in the chloroplast. It localises to the amyloplast. The enzyme catalyses alpha-D-glucose 1-phosphate + ATP + H(+) = ADP-alpha-D-glucose + diphosphate. The protein operates within glycan biosynthesis; starch biosynthesis. Insensitive to 3'phosphoglycerate and orthophosphate. Functionally, this protein plays a role in synthesis of starch. It catalyzes the synthesis of the activated glycosyl donor, ADP-glucose from Glc-1-P and ATP. This is Glucose-1-phosphate adenylyltransferase large subunit (AGA.1) from Triticum aestivum (Wheat).